We begin with the raw amino-acid sequence, 144 residues long: Ferredoxin-thioredoxin reductase catalytic chain, chloroplastic (144 aa).

The transit peptide at 1 to 31 (MTTQASTFAVAVPSVATPFRRHRNPFVVRAQ) directs the protein to the chloroplast. Cys-83 provides a ligand contact to [4Fe-4S] cluster. The Nucleophile role is filled by Cys-85. A disulfide bridge connects residues Cys-85 and Cys-115. [4Fe-4S] cluster contacts are provided by Cys-102, Cys-104, and Cys-113.

The protein belongs to the ferredoxin thioredoxin reductase beta subunit family. In terms of assembly, heterodimer of subunit A (variable subunit) and subunit B (catalytic subunit). Heterodimeric FTR forms a complex with ferredoxin and thioredoxin. It depends on [4Fe-4S] cluster as a cofactor.

The protein localises to the plastid. Its subcellular location is the chloroplast. It carries out the reaction [thioredoxin]-disulfide + 2 reduced [2Fe-2S]-[ferredoxin] + 2 H(+) = [thioredoxin]-dithiol + 2 oxidized [2Fe-2S]-[ferredoxin]. Catalytic subunit of the ferredoxin-thioredoxin reductase (FTR), which catalyzes the two-electron reduction of thioredoxins by the electrons provided by reduced ferredoxin. The chain is Ferredoxin-thioredoxin reductase catalytic chain, chloroplastic (FTRC) from Glycine max (Soybean).